The primary structure comprises 261 residues: MESDCQFLVAPPQPHMYYDTAAAAVDEAQFLRQMVAAADHHAAAAGRGGGDGDGGGGGGGGGERKRRFTEEQVRSLETTFHARRAKLEPREKAELARELGLQPRQVAIWFQNKRARWRSKQIEHDYAALRAQYDALHARVESLRQEKLALADQVDELRGKLNERQDQSGSCDGGGAEGDDDDKRNSVMNASSSGLVEEDYVSCLAVPVVDVSEDGSAACGGSSYEYDHHLDYLGGGQLPDPFCGMPDLWEIWPMVEWNAVA.

2 disordered regions span residues 42–67 (AAAA…RKRR) and 160–188 (KLNE…NSVM). The span at 46–61 (GRGGGDGDGGGGGGGG) shows a compositional bias: gly residues. The homeobox DNA-binding region spans 61 to 121 (GGERKRRFTE…NKRARWRSKQ (61 aa)). Residues 120–164 (KQIEHDYAALRAQYDALHARVESLRQEKLALADQVDELRGKLNER) form a leucine-zipper region.

This sequence belongs to the HD-ZIP homeobox family. Class I subfamily. Expressed in roots and panicles.

The protein resides in the nucleus. Its function is as follows. Probable transcription factor. This chain is Homeobox-leucine zipper protein HOX24 (HOX24), found in Oryza sativa subsp. japonica (Rice).